The sequence spans 138 residues: uncharacterized protein (138 aa).

Positions 3–72 (LYSISKAAEK…LEDINEFVKD (70 aa)) constitute an HTH merR-type domain. Residues 6–25 (ISKAAEKTSISSYTLRYYEK) constitute a DNA-binding region (H-T-H motif).

This is an uncharacterized protein from Bacillus subtilis (strain 168).